A 247-amino-acid polypeptide reads, in one-letter code: Probable transcriptional regulatory protein PC1_1817 (247 aa).

It belongs to the TACO1 family.

It is found in the cytoplasm. This is Probable transcriptional regulatory protein PC1_1817 from Pectobacterium carotovorum subsp. carotovorum (strain PC1).